The chain runs to 247 residues: Homeobox-leucine zipper protein HOX15 (247 aa).

The interval M1–L44 is disordered. The span at P32–L44 shows a compositional bias: low complexity. A DNA-binding region (homeobox) is located at residues N91–Q150. The leucine-zipper stretch occupies residues K149–A193. Residues S221 to C247 are disordered.

Belongs to the HD-ZIP homeobox family. Class II subfamily. Expressed in seedlings, stems, leaf blades and panicles.

It localises to the nucleus. Its function is as follows. Probable transcription factor. The protein is Homeobox-leucine zipper protein HOX15 (HOX15) of Oryza sativa subsp. japonica (Rice).